The primary structure comprises 431 residues: Phosphoribosylamine--glycine ligase (431 aa).

The region spanning 108-315 (KDFLARHKIP…LVLLIEAALA (208 aa)) is the ATP-grasp domain. 134-195 (LREKGAPIVI…EEFLDGEEAS (62 aa)) serves as a coordination point for ATP. Glutamate 285 and asparagine 287 together coordinate Mg(2+).

The protein belongs to the GARS family. The cofactor is Mg(2+). It depends on Mn(2+) as a cofactor.

It carries out the reaction 5-phospho-beta-D-ribosylamine + glycine + ATP = N(1)-(5-phospho-beta-D-ribosyl)glycinamide + ADP + phosphate + H(+). The protein operates within purine metabolism; IMP biosynthesis via de novo pathway; N(1)-(5-phospho-D-ribosyl)glycinamide from 5-phospho-alpha-D-ribose 1-diphosphate: step 2/2. This chain is Phosphoribosylamine--glycine ligase, found in Pseudomonas syringae pv. tomato (strain ATCC BAA-871 / DC3000).